The sequence spans 277 residues: NH(3)-dependent NAD(+) synthetase (277 aa).

46–53 (GISGGQDS) lines the ATP pocket. Asp52 serves as a coordination point for Mg(2+). Arg142 provides a ligand contact to deamido-NAD(+). Position 162 (Thr162) interacts with ATP. Glu167 lines the Mg(2+) pocket. Residues Lys175 and Asp182 each coordinate deamido-NAD(+). The ATP site is built by Lys191 and Thr213. 263-264 (HK) is a binding site for deamido-NAD(+).

This sequence belongs to the NAD synthetase family. Homodimer.

It carries out the reaction deamido-NAD(+) + NH4(+) + ATP = AMP + diphosphate + NAD(+) + H(+). It functions in the pathway cofactor biosynthesis; NAD(+) biosynthesis; NAD(+) from deamido-NAD(+) (ammonia route): step 1/1. Catalyzes the ATP-dependent amidation of deamido-NAD to form NAD. Uses ammonia as a nitrogen source. In Corynebacterium glutamicum (strain ATCC 13032 / DSM 20300 / JCM 1318 / BCRC 11384 / CCUG 27702 / LMG 3730 / NBRC 12168 / NCIMB 10025 / NRRL B-2784 / 534), this protein is NH(3)-dependent NAD(+) synthetase.